The chain runs to 154 residues: Myoglobin (154 aa).

The Globin domain maps to 2-148 (GLSDQEWQQV…FRNDMASKYK (147 aa)). Nitrite is bound at residue His65. Position 65 (His65) interacts with O2. Heme b is bound at residue His94.

Belongs to the globin family. In terms of assembly, monomeric.

It localises to the cytoplasm. Its subcellular location is the sarcoplasm. It carries out the reaction Fe(III)-heme b-[protein] + nitric oxide + H2O = Fe(II)-heme b-[protein] + nitrite + 2 H(+). The enzyme catalyses H2O2 + AH2 = A + 2 H2O. Its function is as follows. Monomeric heme protein which primary function is to store oxygen and facilitate its diffusion within muscle tissues. Reversibly binds oxygen through a pentacoordinated heme iron and enables its timely and efficient release as needed during periods of heightened demand. Depending on the oxidative conditions of tissues and cells, and in addition to its ability to bind oxygen, it also has a nitrite reductase activity whereby it regulates the production of bioactive nitric oxide. Under stress conditions, like hypoxia and anoxia, it also protects cells against reactive oxygen species thanks to its pseudoperoxidase activity. The protein is Myoglobin (MB) of Gallus gallus (Chicken).